The primary structure comprises 107 residues: MGVEITIIKEGKGNIPPVGSNVTVHHAGTLTNGTVFDSSRKRGQPFNFKLGAGQVIKGWDEGVAKMKVGETSKLTISPDFGYGARGAGGVIPPNATLVFEVELITFK.

The PPIase FKBP-type domain occupies 19–107 (GSNVTVHHAG…VFEVELITFK (89 aa)).

This sequence belongs to the FKBP-type PPIase family.

It carries out the reaction [protein]-peptidylproline (omega=180) = [protein]-peptidylproline (omega=0). Inhibited by both FK506 and rapamycin. PPIases accelerate the folding of proteins by catalyzing the cis-trans isomerization of proline imidic peptide bonds in oligopeptides. In Dictyostelium discoideum (Social amoeba), this protein is FK506-binding protein 1 (fkbp1).